The following is a 495-amino-acid chain: MNPSERFFSKLRKLTVYLETESSSLLHTSQNLKEDEEDEETGAQALYQLHSEVRALKRQVRDQVATHDTSSADLRSFIRRCLVLKQRTTEDIDSLKKHYEKYGYRPRISRLGSTEVNCTKEAEERAERDAEKLDAAEEDEETERGDCDKVDQSVTPEKMPPPVDQLQTPKLSDFGLSALQFQRVLGEAEVPLSAAPESAIALSSPPILMNLQPPQPKTPKCSLSMEEDALTPRLEDFGISEYTMCWNNDFTMDLFNKKPPKNRSERNENVLKPHNVFSNTSSVLNKDVANKSLESPEPPEFCTPGFKIAKNHVPSTPLFNGKNDLNSPPRLNNNCPSTPELPAFETPFVSKLIKKEDREEESKIHSESQENSLRLPDLSTTNGTSWNDAPEMPKMLRYEEEALPEMPILQSNFGSSLAFKNTSGESLSRMKTGAGHMLEMKQTSVPVPEDGFNQDWCLSTPKVRVKFPAEPCTPEMPDMSSVTQDILKLVAQCKY.

Over residues 119-135 (TKEAEERAERDAEKLDA) the composition is skewed to basic and acidic residues. The segment at 119 to 165 (TKEAEERAERDAEKLDAAEEDEETERGDCDKVDQSVTPEKMPPPVDQ) is disordered. Position 295 is a phosphoserine (Ser-295). A compositionally biased stretch (basic and acidic residues) spans 355–368 (KEDREEESKIHSES). The interval 355–391 (KEDREEESKIHSESQENSLRLPDLSTTNGTSWNDAPE) is disordered. The segment covering 378–387 (LSTTNGTSWN) has biased composition (polar residues).

It belongs to the SKA3 family. Component of the SKA complex, composed of ska1, ska2 and ska3.

The protein resides in the cytoplasm. It is found in the cytoskeleton. Its subcellular location is the spindle. The protein localises to the chromosome. It localises to the centromere. The protein resides in the kinetochore. Component of the SKA complex, a microtubule plus end-binding complex of the outer kinetochore that stabilizes spindle microtubule-kinetochore attachments, promotes alignment of chromosomes at the mitotic spindle equator (chromosome congression) and assists suppression of the spindle assembly checkpoint. Kinetochores, consisting of a centromere-associated inner segment and a microtubule-contacting outer segment, play a crucial role in chromosome segregation by mediating the physical connection between centromeric DNA and spindle microtubules. The outer kinetochore is made up of the ten-subunit KMN network complex, comprising the MIS12, NDC80 and KNL1 complexes, and auxiliary microtubule-associated components such as the SKA complex; together they connect the outer kinetochore with the inner kinetochore, bind microtubules, and mediate interactions with mitotic checkpoint proteins that delay anaphase until chromosomes are bioriented on the spindle. The SKA complex is loaded onto bioriented kinetochores and it facilitates chromosome congression by stabilizing microtubules, and end-on attachment of the NDC80 complex to depolymerizing spindle microtubules, thereby assisting the poleward-moving kinetochore in withstanding microtubule pulling forces. The complex associates with dynamic microtubule plus-ends and can track both depolymerizing and elongating microtubules. The complex recruits protein phosphatase 1 (PP1) to the kinetochore in prometaphase and metaphase, to oppose spindle assembly checkpoint signaling and promote the onset of anaphase. Within the complex, binds microtubules but with a much lower affinity than SKA1. During meiosis the SKA complex stabilizes the meiotic spindle and is required for its migration to the cortex. This is SKA complex subunit 3 (ska3) from Danio rerio (Zebrafish).